Here is a 131-residue protein sequence, read N- to C-terminus: Small ribosomal subunit protein uS8 (131 aa).

This sequence belongs to the universal ribosomal protein uS8 family. As to quaternary structure, part of the 30S ribosomal subunit. Contacts proteins S5 and S12.

In terms of biological role, one of the primary rRNA binding proteins, it binds directly to 16S rRNA central domain where it helps coordinate assembly of the platform of the 30S subunit. The sequence is that of Small ribosomal subunit protein uS8 from Burkholderia mallei (strain NCTC 10247).